The chain runs to 460 residues: Phosphoenolpyruvate carboxylase (460 aa).

This sequence belongs to the PEPCase type 2 family. As to quaternary structure, homotetramer. The cofactor is Mg(2+).

It carries out the reaction oxaloacetate + phosphate = phosphoenolpyruvate + hydrogencarbonate. Functionally, catalyzes the irreversible beta-carboxylation of phosphoenolpyruvate (PEP) to form oxaloacetate (OAA), a four-carbon dicarboxylic acid source for the tricarboxylic acid cycle. The chain is Phosphoenolpyruvate carboxylase from Pyrobaculum arsenaticum (strain DSM 13514 / JCM 11321 / PZ6).